The following is a 943-amino-acid chain: Conidiophore development regulator abaA (943 aa).

2 disordered regions span residues 1 to 69 (MSSS…FNGG) and 111 to 133 (TSRQ…HQRG). Residues 29 to 43 (IDTRRSFHGDSRLPL) are compositionally biased toward basic and acidic residues. Residues 59-68 (PSSAHSSFNG) show a composition bias toward polar residues. The segment at residues 161–254 (QKDKGGVWRR…QVVKKFFEDL (94 aa)) is a DNA-binding region (TEA). The segment covering 537-555 (EHQRKKEKRSCGKKPDLER) has biased composition (basic and acidic residues). 2 disordered regions span residues 537-575 (EHQR…AAWT) and 809-901 (GAAG…HHPG). Residues 865 to 889 (DSWTAGSSAGGAPAATPTGPDWGPT) show a composition bias toward low complexity.

The protein belongs to the TEC1 family.

It localises to the nucleus. In terms of biological role, brlA, abaA and wetA are pivotal regulators of conidiophore development and conidium maturation. They act individually and together to regulate their own expression and that of numerous other sporulation-specific genes. Binds to the sequence 5'-CATTCY-3', where Y is a pyrimidine, making both major- and minor-groove contacts. This chain is Conidiophore development regulator abaA, found in Hapsidospora chrysogena (Acremonium chrysogenum).